Consider the following 75-residue polypeptide: Small ribosomal subunit protein bS18 (75 aa).

This sequence belongs to the bacterial ribosomal protein bS18 family. In terms of assembly, part of the 30S ribosomal subunit. Forms a tight heterodimer with protein bS6.

Functionally, binds as a heterodimer with protein bS6 to the central domain of the 16S rRNA, where it helps stabilize the platform of the 30S subunit. This is Small ribosomal subunit protein bS18 from Yersinia enterocolitica serotype O:8 / biotype 1B (strain NCTC 13174 / 8081).